A 168-amino-acid polypeptide reads, in one-letter code: Photosystem I assembly protein Ycf3 (168 aa).

TPR repeat units lie at residues 35 to 68 (AFTY…EIDP), 72 to 105 (SYIL…NPFL), and 120 to 153 (GEQA…TPGN).

Belongs to the Ycf3 family.

It localises to the plastid. It is found in the chloroplast thylakoid membrane. Essential for the assembly of the photosystem I (PSI) complex. May act as a chaperone-like factor to guide the assembly of the PSI subunits. The polypeptide is Photosystem I assembly protein Ycf3 (Populus alba (White poplar)).